Reading from the N-terminus, the 434-residue chain is Septin-6 (434 aa).

An N-acetylalanine modification is found at alanine 2. Serine 27 is subject to Phosphoserine. The Septin-type G domain occupies 39–305 (QGFCFNILCV…ELYRRCKLEE (267 aa)). The tract at residues 49 to 56 (GETGLGKS) is G1 motif. GTP is bound by residues 49–56 (GETGLGKS), glycine 104, 185–193 (KADAISKSE), glycine 239, and arginine 254. Residues 101–104 (STVG) are G3 motif. The tract at residues 184–187 (AKAD) is G4 motif. Positions 321–409 (QETYEAKRNE…KTAAELLQSQ (89 aa)) form a coiled coil. The residue at position 367 (lysine 367) is an N6-acetyllysine. A disordered region spans residues 405–434 (LLQSQGSQAGGSQTLKRDKEKKNNPWLCTE). Positions 407-417 (QSQGSQAGGSQ) are enriched in low complexity. Phosphoserine is present on serine 416. Threonine 418 is subject to Phosphothreonine.

It belongs to the TRAFAC class TrmE-Era-EngA-EngB-Septin-like GTPase superfamily. Septin GTPase family. Septins polymerize into heterooligomeric protein complexes that form filaments, and associate with cellular membranes, actin filaments and microtubules. GTPase activity is required for filament formation. Filaments are assembled from asymmetrical heterotrimers, composed of SEPTIN2, SEPTIN6 and SEPTIN7 that associate head-to-head to form a hexameric unit. Within the trimer, directly interacts with SEPTIN2 and SEPTIN7. Also interacts with SEPTIN9 and SEPTIN12. Interaction with SEPTIN12 alters filament structure. Component of a septin core octameric complex consisting of SEPTIN12, SEPTIN7, SEPTIN6 and SEPTIN2 or SEPTIN4 in the order 12-7-6-2-2-6-7-12 or 12-7-6-4-4-6-7-12 and located in the sperm annulus. Interacts with SOCS7. Interacts with HNRNPA1. In terms of assembly, (Microbial infection) Interacts with HCV NS5B. Widely expressed.

The protein resides in the cytoplasm. It is found in the cytoskeleton. The protein localises to the spindle. Its subcellular location is the chromosome. It localises to the centromere. The protein resides in the kinetochore. It is found in the cleavage furrow. The protein localises to the midbody. Its subcellular location is the cell projection. It localises to the cilium. The protein resides in the flagellum. Filament-forming cytoskeletal GTPase. Required for normal organization of the actin cytoskeleton. Involved in cytokinesis. May play a role in HCV RNA replication. Forms a filamentous structure with SEPTIN12, SEPTIN6, SEPTIN2 and probably SEPTIN4 at the sperm annulus which is required for the structural integrity and motility of the sperm tail during postmeiotic differentiation. This Homo sapiens (Human) protein is Septin-6.